The chain runs to 80 residues: Cell division activator CedA (80 aa).

It belongs to the CedA family.

Functionally, activates the cell division inhibited by chromosomal DNA over-replication. This is Cell division activator CedA from Salmonella typhimurium (strain LT2 / SGSC1412 / ATCC 700720).